Reading from the N-terminus, the 7119-residue chain is Replicase polyprotein 1ab (7119 aa).

Positions 25-151 (RSDHVACTVP…EYTFLLRKNG (127 aa)) constitute a CoV Nsp1 globular domain. The BetaCoV Nsp1 C-terminal domain maps to 167 to 195 (TPYVEILDDLEADPTGKYSQNLLKKLIGG). In terms of domain architecture, CoV Nsp2 N-terminal spans 197-472 (CIPIDQYMCG…WDKVVETANL (276 aa)). Residues cysteine 339, cysteine 342, cysteine 358, and cysteine 360 each coordinate Zn(2+). The segment at 339 to 360 (CNACGRGTWCTGNAIQGFACDC) is C4. The CoV Nsp2 middle domain occupies 478 to 712 (QRSLNFCQQF…LDIMSKAMKL (235 aa)). The CoV Nsp2 C-terminal domain occupies 714-847 (HTNVSWAGTK…VSTLFRLKGG (134 aa)). The region spanning 851 to 960 (KKVTFGDVNT…MTFSINPVED (110 aa)) is the Ubiquitin-like 1 domain. 2 consecutive Macro domains span residues 1152–1321 (DLSK…KPDG) and 1322–1446 (LVYS…AIQT). A DPUP domain is found at 1446 to 1519 (TPETAFINNV…LEACRAYLTS (74 aa)). The Ubiquitin-like 2 domain maps to 1524 to 1579 (QVNIEVLVTIDGVNFRTVILNDTTTFRKQLGATFYKGVDISDAFPTVKMGGESLFV). Positions 1593–1864 (EYYGTSDVTF…KVEVNPDLSN (272 aa)) constitute a Peptidase C16 domain. Catalysis depends on cysteine 1634, which acts as the For PL-PRO activity. Zn(2+)-binding residues include cysteine 1714, cysteine 1717, cysteine 1749, and cysteine 1751. The C4-type zinc finger occupies 1714-1751 (CTVCGIRDIEYTGMRACVYAGVNSMEELQSVFNETCVC). Active-site for PL-PRO activity residues include histidine 1800 and aspartate 1815. Positions 1878–1995 (TIKYSPATIL…QLYDVAPIVL (118 aa)) constitute a Nucleic acid-binding domain. The G2M domain maps to 2012–2133 (HNVPVVDDVP…AKITVTATTA (122 aa)). The next 3 membrane-spanning stretches (helical) occupy residues 2112 to 2132 (VLLG…TATT), 2145 to 2165 (FVVN…LFFL), and 2222 to 2242 (LFLL…LVLF). The tract at residues 2112-2395 (VLLGASSLFA…VTHIPLHGLV (284 aa)) is HD1. In terms of domain architecture, 3Ecto spans 2259-2325 (LAIYKEVRSY…LQMLQTHITS (67 aa)). Intrachain disulfides connect cysteine 2275-cysteine 2303 and cysteine 2293-cysteine 2300. The next 3 membrane-spanning stretches (helical) occupy residues 2326-2346 (YVLN…YVLY), 2350-2370 (FNVL…SAFV), and 2375-2395 (YNYI…HGLV). The interval 2409-2499 (KFYSHVINGC…TLRRLIKPTD (91 aa)) is Y1. The CoV Nsp3 Y domain maps to 2409–2782 (KFYSHVINGC…LSVKFSATKI (374 aa)). Histidine 2413, cysteine 2418, cysteine 2423, cysteine 2426, cysteine 2459, histidine 2462, cysteine 2466, and cysteine 2469 together coordinate Zn(2+). Positions 2413-2426 (HVINGCKDTACLLC) are ZF1. The tract at residues 2459–2469 (CCKHNWNCVEC) is ZF2. Residues 2500–2598 (QSHYYVDSVV…LVDVNLVTTV (99 aa)) are Y2. Positions 2500–2782 (QSHYYVDSVV…LSVKFSATKI (283 aa)) are coV-Y. The Y3 stretch occupies residues 2599 to 2681 (GDSREIAIKM…DALQYAHKND (83 aa)). The Y4 stretch occupies residues 2682–2782 (IQLTTECYNN…LSVKFSATKI (101 aa)). 4 helical membrane passes run 2800–2820 (GYCI…FCLP), 3072–3092 (STSL…FYYI), 3105–3125 (CAVV…FIVA), and 3149–3169 (AFIM…IWML). An HD2 region spans residues 2800–3169 (GYCILTLFVF…FGAVVPIWML (370 aa)). One can recognise a Nsp4C domain in the interval 3195-3291 (VFTDGKLNCS…NCSVTSSVLQ (97 aa)). The Peptidase C30 domain occupies 3292–3597 (SGLVKMSAPS…NMQVMGVVMQ (306 aa)). Residues histidine 3332 and cysteine 3439 each act as for 3CL-PRO activity in the active site. 7 helical membrane-spanning segments follow: residues 3603–3623 (ISYG…VSVM), 3637–3657 (TIPT…MFTV), 3662–3682 (TFMS…NIVY), 3707–3727 (RTTH…AIIV), 3735–3755 (MSNL…YVIG), 3784–3804 (LAKF…FILP), and 3808–3828 (LVLL…GVFS). The tract at residues 3603-3828 (ISYGFIHWLI…MCTMYFGVFS (226 aa)) is HD3. The RdRp Nsp7 cofactor domain maps to 3890-3972 (SKLTDLKCTS…DLFENSSVLQ (83 aa)). The RdRp Nsp8 cofactor domain maps to 3973–4171 (ATLTEFSHLA…RSSSSAVKLQ (199 aa)). In terms of domain architecture, Nsp9 ssRNA-binding spans 4172-4281 (NNEIHPKGLK…GHIAATVRLQ (110 aa)). Residues 4282-4420 (AGANTEFASN…DALRNNTVPQ (139 aa)) enclose the ExoN/MTase coactivator domain. Zn(2+) is bound by residues cysteine 4355, cysteine 4358, histidine 4364, cysteine 4371, cysteine 4397, cysteine 4400, cysteine 4408, and cysteine 4410. 2 zinc fingers span residues 4355–4371 (CLYC…SGVC) and 4397–4410 (CNVC…GCNC). In terms of domain architecture, NiRAN spans 4426–4683 (FLNRVRGSSV…AAETHKDCDF (258 aa)). The Mn(2+) site is built by asparagine 4631 and aspartate 4640. Positions 4688–4786 (IEWPLLEYDY…MNMDFNIHRH (99 aa)) constitute a Nsp12 Interface domain. Positions 4717, 4723, 4728, 4732, and 4909 each coordinate Zn(2+). The region spanning 4787 to 5354 (RLALKELMMY…DLYSSPTTLQ (568 aa)) is the Nsp12 RNA-dependent RNA polymerase domain. Residues 4789–5003 (ALKELMMYAA…HQKMLKSMAA (215 aa)) are rdRp Fingers N-ter. Residues 5004–5042 (TRGATCVIGTTKFYGGWDFMLKTLYKDVESPHLMGWDYP) form a rdRp Palm N-ter region. One can recognise a RdRp catalytic domain in the interval 5034-5196 (PHLMGWDYPK…CYNSDYAAKG (163 aa)). The rdRp Fingers C-ter stretch occupies residues 5043–5101 (KCDRAMPNMCRILASLILARKHSTCCTNSDRFYRLANECAQVLSEYVLCGGGYYVKPGG). Zn(2+) contacts are provided by histidine 5064, cysteine 5067, and cysteine 5068. Residues 5102–5237 (TSSGDATTAY…EKGPHEFCSQ (136 aa)) form a rdRp Palm C-ter region. Active-site residues include serine 5181, aspartate 5182, and aspartate 5183. Positions 5238–5354 (HTLYIKDGDD…DLYSSPTTLQ (117 aa)) are rdRp Thumb. The CV ZBD domain maps to 5355–5467 (AVGSCVVCHS…MEFNRLATCD (113 aa)). Residues cysteine 5359, cysteine 5362, cysteine 5370, cysteine 5373, cysteine 5380, cysteine 5383, histidine 5387, histidine 5393, cysteine 5404, cysteine 5409, cysteine 5426, and histidine 5429 each coordinate Zn(2+). The (+)RNA virus helicase ATP-binding domain occupies 5611–5792 (TVPEEFANHV…MCNLGPDIFL (182 aa)). 5636–5643 (GPPGTGKS) is a binding site for ATP. Residues 5793-5967 (SVCYRCPKEI…GLFKDCSRED (175 aa)) enclose the (+)RNA virus helicase C-terminal domain. In terms of domain architecture, ExoN spans 6024–6239 (LFITRDEAIR…RCLAIYDCFI (216 aa)). Residues aspartate 6042, glutamate 6044, and glutamate 6143 contribute to the active site. 7 residues coordinate Zn(2+): cysteine 6159, cysteine 6162, cysteine 6178, histidine 6181, histidine 6209, cysteine 6213, and histidine 6216. Catalysis depends on residues histidine 6220 and aspartate 6225. Cysteine 6231 provides a ligand contact to Zn(2+). The N7-MTase domain maps to 6248-6475 (YPYISHEQKL…NLWSTFVKVQ (228 aa)). 6283–6289 (DIGNPKG) is an S-adenosyl-L-methionine binding site. The interval 6361–6375 (CNGGSLYVNKHAFHT) is gpppA-binding. Zn(2+)-binding residues include cysteine 6399, cysteine 6421, cysteine 6432, and histidine 6435. A Nsp15 N-terminal oligomerization domain is found at 6476-6536 (GLENIAFNVI…NVAFELYAKR (61 aa)). The region spanning 6537-6658 (AVRSHPDLNL…LYKKVNNEFV (122 aa)) is the AV-Nsp11N/CoV-Nsp15M domain. The NendoU domain occupies 6675–6814 (TVLTPMEEDF…RDGKVQTFYP (140 aa)). Residues histidine 6705, histidine 6720, lysine 6760, lysine 6863, aspartate 6947, lysine 6987, and glutamate 7020 contribute to the active site. Residues 6819–7113 (TNDWKPGLTM…TLNVSTDVLV (295 aa)) enclose the Nidovirus-type SAM-dependent 2'-O-MTase domain.

The protein belongs to the coronaviruses polyprotein 1ab family. Interacts with host PHB and PHB2. In terms of assembly, interacts with papain-like protease nsp3 and non-structural protein 6. As to quaternary structure, monomer. Homodimer. Only the homodimer shows catalytic activity. Interacts with nsp8 and nsp12 to form the replication-transcription complex (RTC): nsp12, nsp7, two subunits of nsp8, and up to two subunits of nsp13. In terms of assembly, interacts with nsp7, nsp13 and nsp12 to form the replication-transcription complex (RTC): nsp12, nsp7, two subunits of nsp8, and up to two subunits of nsp13. As to quaternary structure, interacts with nsp12. Interacts with proofreading exoribonuclease nsp14 and 2'-O-methyltransferase nsp16; these interactions enhance nsp14 and nsp16 enzymatic activities. In terms of assembly, interacts with nsp7 and nsp8 to form the replication-transcription complex (RTC): nsp12, nsp7, two subunits of nsp8, and up to two subunits of nsp13. Interacts with nsp9. As to quaternary structure, interacts with nsp8 to form the replication-transcription complex (RTC): nsp12, nsp7, two subunits of nsp8, and up to two subunits of nsp13. Requires Mn(2+) as cofactor. It depends on Mg(2+) as a cofactor. Post-translationally, specific enzymatic cleavages in vivo by its own proteases yield mature proteins. 3CL-PRO and PL-PRO proteinases are autocatalytically processed.

The protein resides in the host membrane. The protein localises to the host cytoplasm. Its subcellular location is the host perinuclear region. It is found in the host endoplasmic reticulum-Golgi intermediate compartment. The enzyme catalyses RNA(n) + a ribonucleoside 5'-triphosphate = RNA(n+1) + diphosphate. The catalysed reaction is ATP + H2O = ADP + phosphate + H(+). It catalyses the reaction Thiol-dependent hydrolysis of ester, thioester, amide, peptide and isopeptide bonds formed by the C-terminal Gly of ubiquitin (a 76-residue protein attached to proteins as an intracellular targeting signal).. It carries out the reaction a 5'-end (N(7)-methyl 5'-triphosphoguanosine)-ribonucleoside in mRNA + S-adenosyl-L-methionine = a 5'-end (N(7)-methyl 5'-triphosphoguanosine)-(2'-O-methyl-ribonucleoside) in mRNA + S-adenosyl-L-homocysteine + H(+). The enzyme catalyses uridylyl-uridylyl-ribonucleotide-RNA = a 3'-end uridylyl-2',3'-cyclophospho-uridine-RNA + a 5'-end dephospho-ribonucleoside-RNA. The catalysed reaction is a 5'-end diphospho-ribonucleoside in mRNA + GTP + H(+) = a 5'-end (5'-triphosphoguanosine)-ribonucleoside in mRNA + diphosphate. It catalyses the reaction a 5'-end (5'-triphosphoguanosine)-ribonucleoside in mRNA + S-adenosyl-L-methionine = a 5'-end (N(7)-methyl 5'-triphosphoguanosine)-ribonucleoside in mRNA + S-adenosyl-L-homocysteine. Its function is as follows. The replicase polyprotein of coronaviruses is a multifunctional protein: it contains the activities necessary for the transcription of negative stranded RNA, leader RNA, subgenomic mRNAs and progeny virion RNA as well as proteinases responsible for the cleavage of the polyprotein into functional products. In terms of biological role, inhibits host translation by interacting with the 40S ribosomal subunit. The nsp1-40S ribosome complex further induces an endonucleolytic cleavage near the 5'UTR of host mRNAs, targeting them for degradation. Viral mRNAs are not susceptible to nsp1-mediated endonucleolytic RNA cleavage thanks to the presence of a 5'-end leader sequence and are therefore protected from degradation. By suppressing host gene expression, nsp1 facilitates efficient viral gene expression in infected cells and evasion from host immune response. May play a role in the modulation of host cell survival signaling pathway by interacting with host PHB and PHB2. Indeed, these two proteins play a role in maintaining the functional integrity of the mitochondria and protecting cells from various stresses. Functionally, responsible for the cleavages located at the N-terminus of the replicase polyprotein. In addition, PL-PRO possesses a deubiquitinating/deISGylating activity and processes both 'Lys-48'- and 'Lys-63'-linked polyubiquitin chains from cellular substrates. Participates together with nsp4 in the assembly of virally-induced cytoplasmic double-membrane vesicles necessary for viral replication. Antagonizes innate immune induction of type I interferon by blocking the phosphorylation, dimerization and subsequent nuclear translocation of host IRF3. Also prevents host NF-kappa-B signaling. Its function is as follows. Participates in the assembly of virally-induced cytoplasmic double-membrane vesicles necessary for viral replication. In terms of biological role, cleaves the C-terminus of replicase polyprotein at 11 sites. Recognizes substrates containing the core sequence [ILMVF]-Q-|-[SGACN]. Also able to bind an ADP-ribose-1''-phosphate (ADRP). Plays a role in the initial induction of autophagosomes from host endoplasmic reticulum. Later, limits the expansion of these phagosomes that are no longer able to deliver viral components to lysosomes. Functionally, forms a hexadecamer with nsp8 (8 subunits of each) that may participate in viral replication by acting as a primase. Alternatively, may synthesize substantially longer products than oligonucleotide primers. Its function is as follows. Forms a hexadecamer with nsp7 (8 subunits of each) that may participate in viral replication by acting as a primase. Alternatively, may synthesize substantially longer products than oligonucleotide primers. In terms of biological role, forms a primer, NSP9-pU, which is utilized by the polymerase for the initiation of RNA chains. Interacts with ribosome signal recognition particle RNA (SRP). Together with NSP8, suppress protein integration into the cell membrane, thereby disrupting host immune defenses. Plays a pivotal role in viral transcription by stimulating both nsp14 3'-5' exoribonuclease and nsp16 2'-O-methyltransferase activities. Therefore plays an essential role in viral mRNAs cap methylation. Functionally, RNA-directed RNA polymerase that catalyzes the transcription of viral genomic and subgenomic RNAs. Acts in complex with nsp7 and nsp8 to transcribe both the minus and positive strands of genomic RNA. The kinase-like NiRAN domain of NSP12 attaches one or more nucleotides to the amino terminus of NSP9, forming a covalent RNA-protein intermediate that serves as transcription/replication primer. Subgenomic RNAs (sgRNAs) are formed by discontinuous transcription: The polymerase has the ability to pause at transcription-regulating sequences (TRS) and jump to the leader TRS, resulting in a major deletion. This creates a series of subgenomic RNAs that are replicated, transcribed and translated. In addition, Nsp12 is a subunit of the viral RNA capping enzyme that catalyzes the RNA guanylyltransferase reaction for genomic and sub-genomic RNAs. Subsequently, the NiRAN domain transfers RNA to GDP, and forms the core cap structure GpppA-RNA. Its function is as follows. RNA-directed RNA polymerase that catalyzes the transcription of viral genomic and subgenomic RNAs. Acts in complex with nsp7 and nsp8 to transcribe both the minus and positive strands of genomic RNA. Subgenomic RNAs (sgRNAs) are formed by discontinuous transcription: The polymerase has the ability to pause at transcription-regulating sequences (TRS) and jump to the leader TRS, resulting in a major deletion. This creates a series of subgenomic RNAs that are replicated, transcribed and translated. In addition, Nsp12 is a subunit of the viral RNA capping enzyme that catalyzes the RNA guanylyltransferase reaction for genomic and sub-genomic RNAs. The kinase-like NiRAN domain of NSP12 transfers RNA to the amino terminus of NSP9, forming a covalent RNA-protein intermediate. Subsequently, the NiRAN domain transfers RNA to GDP, and forms the core cap structure GpppA-RNA. In terms of biological role, multi-functional protein with a zinc-binding domain in N-terminus displaying RNA and DNA duplex-unwinding activities with 5' to 3' polarity. Activity of helicase is dependent on magnesium. Plays a role in viral RNA synthesis through two distinct activities. The N7-guanine methyltransferase activity plays a role in the formation of the cap structure GpppA-RNA. The proofreading exoribonuclease reduces the sensitivity of the virus to RNA mutagens during replication. This activity acts on both ssRNA and dsRNA in a 3'-5' direction. Functionally, plays a role in viral transcription/replication and prevents the simultaneous activation of host cell dsRNA sensors, such as MDA5/IFIH1, OAS, and PKR. Acts by degrading the 5'-polyuridines generated during replication of the poly(A) region of viral genomic and subgenomic RNAs. Catalyzes a two-step reaction in which a 2'3'-cyclic phosphate (2'3'-cP) is first generated by 2'-O transesterification, which is then hydrolyzed to a 3'-phosphate (3'-P). If not degraded, poly(U) RNA would hybridize with poly(A) RNA tails and activate host dsRNA sensors. Its function is as follows. Methyltransferase that mediates mRNA cap 2'-O-ribose methylation to the 5'-cap structure of viral mRNAs. N7-methyl guanosine cap is a prerequisite for binding of nsp16. Therefore plays an essential role in viral mRNAs cap methylation which is essential to evade immune system. This chain is Replicase polyprotein 1ab (rep), found in Tylonycteris pachypus (Lesser bamboo bat).